The sequence spans 206 residues: Oligoribonuclease (206 aa).

The 164-residue stretch at 20-183 folds into the Exonuclease domain; that stretch reads LVWLDMEMTG…ADIHESIDEL (164 aa). The active site involves Tyr141.

The protein belongs to the oligoribonuclease family.

It is found in the cytoplasm. 3'-to-5' exoribonuclease specific for small oligoribonucleotides. This Burkholderia cenocepacia (strain HI2424) protein is Oligoribonuclease.